The sequence spans 256 residues: Protein CC2D2B homolog (256 aa).

A disordered region spans residues 1–24; the sequence is MSEEMDNVTAEEITDKHLQKDLDA. The span at 13–22 shows a compositional bias: basic and acidic residues; the sequence is ITDKHLQKDL. Coiled coils occupy residues 136-159 and 194-214; these read DLLKVKAADYEDDQEQIKKQKANI and EIYKKTCNKMENRLLKLEEGK.

In Macaca fascicularis (Crab-eating macaque), this protein is Protein CC2D2B homolog.